The primary structure comprises 864 residues: Mitochondrial 15S rRNA processing factor CCM1 (864 aa).

The transit peptide at 1–76 (MYMARCGPKN…REFSNTLKER (76 aa)) directs the protein to the mitochondrion. 2 PPR repeats span residues 319–353 (NKQN…STKH) and 356–390 (DICT…NIKP).

Belongs to the CCM1 family. As to quaternary structure, binds to mitochondrial small subunit 15S rRNA.

Its subcellular location is the mitochondrion. Regulates mitochondrial small subunit maturation by controlling 15S rRNA 5'-end processing. Localizes to the 5' precursor of the 15S rRNA in a position that is subsequently occupied by mS47 in the mature yeast mtSSU. Uses structure and sequence-specific RNA recognition, binding to a single-stranded region of the precursor and specifically recognizing bases -6 to -1. The exchange of Ccm1 for mS47 is coupled to the irreversible removal of precursor rRNA that is accompanied by conformational changes of the mitoribosomal proteins uS5m and mS26. These conformational changes signal completion of 5'-end rRNA processing through protection of the mature 5'-end of the 15S rRNA and stabilization of mS47. The removal of the 5' precursor together with the dissociation of Ccm1 may be catalyzed by the 5'-3' exoribonuclease Pet127. Involved in the specific removal of group I introns in mitochondrial encoded transcripts. The chain is Mitochondrial 15S rRNA processing factor CCM1 (CCM1) from Saccharomyces cerevisiae (strain Lalvin EC1118 / Prise de mousse) (Baker's yeast).